The following is a 1183-amino-acid chain: Translation initiation factor IF-2 (1183 aa).

Disordered stretches follow at residues 55–512 and 538–574; these read KSKT…KVHI and ASLA…RQRR. Positions 83 to 99 are enriched in basic and acidic residues; that stretch reads TQKDQKTEPKKKNHDQT. Polar residues-rich tracts occupy residues 100–143 and 165–177; these read ELSQ…QITA and KPLT…IPQS. The span at 220-229 shows a compositional bias: basic and acidic residues; that stretch reads PKIDIQDKKP. Polar residues predominate over residues 231–252; it reads QPNNQKAKTRINQGEISPQKVG. Residues 253–267 show a composition bias toward low complexity; the sequence is QGNIQKIKSQNKQNQ. Positions 288–304 are enriched in basic and acidic residues; that stretch reads IRREKPVNKPHTNEVRN. 2 stretches are compositionally biased toward polar residues: residues 324-349 and 357-367; these read QGLS…NRQG and NRTTQGQNRPG. The span at 485–499 shows a compositional bias: basic and acidic residues; it reads GRPDWDDSAKLDALR. Basic residues-rich tracts occupy residues 544–553 and 560–574; these read SKPKVGKRNN and LKKR…RQRR. A tr-type G domain is found at 675 to 847; that stretch reads RRPPVVTVMG…VLLVTEVEDL (173 aa). The segment at 684 to 691 is G1; that stretch reads GHVDHGKT. 684 to 691 contacts GTP; it reads GHVDHGKT. Residues 709–713 are G2; sequence GITQH. The G3 stretch occupies residues 734–737; that stretch reads DTPG. GTP is bound by residues 734-738 and 788-791; these read DTPGH and NKID. A G4 region spans residues 788-791; that stretch reads NKID. Positions 824 to 826 are G5; the sequence is SAI.

This sequence belongs to the TRAFAC class translation factor GTPase superfamily. Classic translation factor GTPase family. IF-2 subfamily.

The protein resides in the cytoplasm. One of the essential components for the initiation of protein synthesis. Protects formylmethionyl-tRNA from spontaneous hydrolysis and promotes its binding to the 30S ribosomal subunits. Also involved in the hydrolysis of GTP during the formation of the 70S ribosomal complex. This is Translation initiation factor IF-2 from Prochlorococcus marinus (strain NATL1A).